A 464-amino-acid polypeptide reads, in one-letter code: Glycine--tRNA ligase (464 aa).

Arg104 and Glu175 together coordinate substrate. ATP is bound by residues 207-209 (RNE), 217-222 (FRTREF), 292-293 (EL), and 336-339 (GVNR). 222 to 226 (FEQME) provides a ligand contact to substrate. 332–336 (EPALG) provides a ligand contact to substrate.

The protein belongs to the class-II aminoacyl-tRNA synthetase family. In terms of assembly, homodimer.

The protein localises to the cytoplasm. It catalyses the reaction tRNA(Gly) + glycine + ATP = glycyl-tRNA(Gly) + AMP + diphosphate. Its function is as follows. Catalyzes the attachment of glycine to tRNA(Gly). The polypeptide is Glycine--tRNA ligase (Leptospira interrogans serogroup Icterohaemorrhagiae serovar Lai (strain 56601)).